The sequence spans 228 residues: Urease accessory protein UreF (228 aa).

It belongs to the UreF family. As to quaternary structure, ureD, UreF and UreG form a complex that acts as a GTP-hydrolysis-dependent molecular chaperone, activating the urease apoprotein by helping to assemble the nickel containing metallocenter of UreC. The UreE protein probably delivers the nickel.

It is found in the cytoplasm. Functionally, required for maturation of urease via the functional incorporation of the urease nickel metallocenter. This chain is Urease accessory protein UreF, found in Prochlorococcus marinus (strain AS9601).